Reading from the N-terminus, the 277-residue chain is NADPH-dependent 7-cyano-7-deazaguanine reductase (277 aa).

A substrate-binding site is contributed by Ile-86–Ser-88. Ser-88–Lys-89 lines the NADPH pocket. Cys-185 functions as the Thioimide intermediate in the catalytic mechanism. The active-site Proton donor is Asp-192. A substrate-binding site is contributed by His-224–Glu-225. Arg-253–Gly-254 is an NADPH binding site.

This sequence belongs to the GTP cyclohydrolase I family. QueF type 2 subfamily. In terms of assembly, homodimer.

It is found in the cytoplasm. It carries out the reaction 7-aminomethyl-7-carbaguanine + 2 NADP(+) = 7-cyano-7-deazaguanine + 2 NADPH + 3 H(+). The protein operates within tRNA modification; tRNA-queuosine biosynthesis. Its function is as follows. Catalyzes the NADPH-dependent reduction of 7-cyano-7-deazaguanine (preQ0) to 7-aminomethyl-7-deazaguanine (preQ1). The chain is NADPH-dependent 7-cyano-7-deazaguanine reductase from Hydrogenovibrio crunogenus (strain DSM 25203 / XCL-2) (Thiomicrospira crunogena).